Here is a 1058-residue protein sequence, read N- to C-terminus: Carbamoyl phosphate synthase large chain (1058 aa).

The tract at residues 1–401 (MPKRTDIQKI…SLLKACRSLE (401 aa)) is carboxyphosphate synthetic domain. R129, R169, G175, G176, R208, I210, E215, G241, I242, H243, Q284, and E298 together coordinate ATP. In terms of domain architecture, ATP-grasp 1 spans 133–327 (KQLMEELEQP…IAKLAAKIAV (195 aa)). Residues Q284, E298, and N300 each coordinate Mg(2+). Residues Q284, E298, and N300 each coordinate Mn(2+). An oligomerization domain region spans residues 402-546 (IGVHHNEIPE…YSTYGWENES (145 aa)). The interval 547-929 (IRSDKESVLV…ALYKAFEASY (383 aa)) is carbamoyl phosphate synthetic domain. The ATP-grasp 2 domain maps to 671–861 (EQALKELDIP…MAQVATKLIL (191 aa)). Residues R707, S746, I748, E752, G777, V778, H779, S780, Q820, and E832 each contribute to the ATP site. Residues Q820, E832, and N834 each coordinate Mg(2+). Mn(2+) is bound by residues Q820, E832, and N834. The MGS-like domain occupies 930-1058 (LHLPTFGNVV…ESRSFVTEAI (129 aa)). Residues 930–1058 (LHLPTFGNVV…ESRSFVTEAI (129 aa)) form an allosteric domain region.

The protein belongs to the CarB family. Composed of two chains; the small (or glutamine) chain promotes the hydrolysis of glutamine to ammonia, which is used by the large (or ammonia) chain to synthesize carbamoyl phosphate. Tetramer of heterodimers (alpha,beta)4. The cofactor is Mg(2+). Mn(2+) serves as cofactor.

It carries out the reaction hydrogencarbonate + L-glutamine + 2 ATP + H2O = carbamoyl phosphate + L-glutamate + 2 ADP + phosphate + 2 H(+). The catalysed reaction is hydrogencarbonate + NH4(+) + 2 ATP = carbamoyl phosphate + 2 ADP + phosphate + 2 H(+). It participates in amino-acid biosynthesis; L-arginine biosynthesis; carbamoyl phosphate from bicarbonate: step 1/1. Its pathway is pyrimidine metabolism; UMP biosynthesis via de novo pathway; (S)-dihydroorotate from bicarbonate: step 1/3. Large subunit of the glutamine-dependent carbamoyl phosphate synthetase (CPSase). CPSase catalyzes the formation of carbamoyl phosphate from the ammonia moiety of glutamine, carbonate, and phosphate donated by ATP, constituting the first step of 2 biosynthetic pathways, one leading to arginine and/or urea and the other to pyrimidine nucleotides. The large subunit (synthetase) binds the substrates ammonia (free or transferred from glutamine from the small subunit), hydrogencarbonate and ATP and carries out an ATP-coupled ligase reaction, activating hydrogencarbonate by forming carboxy phosphate which reacts with ammonia to form carbamoyl phosphate. This is Carbamoyl phosphate synthase large chain from Streptococcus pneumoniae serotype 2 (strain D39 / NCTC 7466).